Here is a 425-residue protein sequence, read N- to C-terminus: Tol-Pal system protein TolB (425 aa).

An N-terminal signal peptide occupies residues 1 to 23 (MQMMKKRILLCLLVGMTCLPVLA).

Belongs to the TolB family. As to quaternary structure, the Tol-Pal system is composed of five core proteins: the inner membrane proteins TolA, TolQ and TolR, the periplasmic protein TolB and the outer membrane protein Pal. They form a network linking the inner and outer membranes and the peptidoglycan layer.

The protein localises to the periplasm. In terms of biological role, part of the Tol-Pal system, which plays a role in outer membrane invagination during cell division and is important for maintaining outer membrane integrity. This is Tol-Pal system protein TolB from Albidiferax ferrireducens (strain ATCC BAA-621 / DSM 15236 / T118) (Rhodoferax ferrireducens).